The sequence spans 725 residues: Dolichyl-phosphate-mannose--protein mannosyltransferase 5 (725 aa).

The next 6 helical transmembrane spans lie at 34 to 54 (QFAV…LYIP), 117 to 137 (YLWL…LTFF), 145 to 165 (SVIS…VTVS), 192 to 212 (IPFT…LGLN), 219 to 239 (GLFT…EILG), and 256 to 276 (VVAF…IHFE). 3 MIR domains span residues 303–356 (PLQV…IETK), 368–427 (QREV…IRML), and 439–495 (LIKL…VESS). N-linked (GlcNAc...) asparagine glycosylation occurs at Asn409. 4 consecutive transmembrane segments (helical) span residues 570-590 (IYYL…LIAI), 619-639 (FYNN…PYCL), 644-664 (LYLH…SQYL), and 673-693 (IIGG…FYEF).

It belongs to the glycosyltransferase 39 family.

The protein localises to the endoplasmic reticulum membrane. The catalysed reaction is a di-trans,poly-cis-dolichyl beta-D-mannosyl phosphate + L-seryl-[protein] = 3-O-(alpha-D-mannosyl)-L-seryl-[protein] + a di-trans,poly-cis-dolichyl phosphate + H(+). It catalyses the reaction a di-trans,poly-cis-dolichyl beta-D-mannosyl phosphate + L-threonyl-[protein] = 3-O-(alpha-D-mannosyl)-L-threonyl-[protein] + a di-trans,poly-cis-dolichyl phosphate + H(+). It participates in protein modification; protein glycosylation. Protein mannosyltransferase (PMT) involved in hyphal morphogenesis and drug sensitivity. Transfers mannose from Dol-P-mannose to Ser or Thr residues on proteins. PMT1, PMT2 and PMT4 account for most of the protein-O-glycosylation activity, while PMT5 and PMT6 may specifically modulate a much narrower spectrum of target proteins. Required for biofilm formation. The sequence is that of Dolichyl-phosphate-mannose--protein mannosyltransferase 5 from Candida albicans (strain SC5314 / ATCC MYA-2876) (Yeast).